The chain runs to 270 residues: Proteasome subunit alpha (270 aa).

A disordered region spans residues 229–270 (LLDTEAAGSTPTDAPSDTEDGDSTDGTDRADGTTDSTEETEK). The segment covering 244–253 (SDTEDGDSTD) has biased composition (acidic residues).

Belongs to the peptidase T1A family. The 20S proteasome core is composed of 14 alpha and 14 beta subunits that assemble into four stacked heptameric rings, resulting in a barrel-shaped structure. The two inner rings, each composed of seven catalytic beta subunits, are sandwiched by two outer rings, each composed of seven alpha subunits. The catalytic chamber with the active sites is on the inside of the barrel. Has a gated structure, the ends of the cylinder being occluded by the N-termini of the alpha-subunits. Is capped by the proteasome-associated ATPase, ARC.

Its subcellular location is the cytoplasm. The protein operates within protein degradation; proteasomal Pup-dependent pathway. Its activity is regulated as follows. The formation of the proteasomal ATPase ARC-20S proteasome complex, likely via the docking of the C-termini of ARC into the intersubunit pockets in the alpha-rings, may trigger opening of the gate for substrate entry. Interconversion between the open-gate and close-gate conformations leads to a dynamic regulation of the 20S proteasome proteolysis activity. Its function is as follows. Component of the proteasome core, a large protease complex with broad specificity involved in protein degradation. This is Proteasome subunit alpha from Streptomyces griseus subsp. griseus (strain JCM 4626 / CBS 651.72 / NBRC 13350 / KCC S-0626 / ISP 5235).